The chain runs to 248 residues: NADP-dependent 3-hydroxy acid dehydrogenase YdfG (248 aa).

NADP(+) contacts are provided by residues 7–12 (GATAGF), 32–33 (RR), 54–55 (DV), and Asn81. A substrate-binding site is contributed by Ser134. NADP(+) is bound by residues Tyr147, Lys151, and 177–185 (PGLVGGTEF). The Proton acceptor role is filled by Tyr147.

The protein belongs to the short-chain dehydrogenases/reductases (SDR) family. Homotetramer.

The catalysed reaction is 3-hydroxypropanoate + NADP(+) = 3-oxopropanoate + NADPH + H(+). It carries out the reaction L-allo-threonine + NADP(+) = aminoacetone + CO2 + NADPH. NADP-dependent dehydrogenase with broad substrate specificity acting on 3-hydroxy acids. Catalyzes the NADP-dependent oxidation of L-allo-threonine to L-2-amino-3-keto-butyrate, which is spontaneously decarboxylated into aminoacetone. Also acts on D-threonine, L-serine, D-serine, D-3-hydroxyisobutyrate, L-3-hydroxyisobutyrate, D-glycerate and L-glycerate. Able to catalyze the reduction of the malonic semialdehyde to 3-hydroxypropionic acid. YdfG is apparently supplementing RutE, the presumed malonic semialdehyde reductase involved in pyrimidine degradation since both are able to detoxify malonic semialdehyde. In Escherichia coli O157:H7, this protein is NADP-dependent 3-hydroxy acid dehydrogenase YdfG.